A 231-amino-acid chain; its full sequence is 7-cyano-7-deazaguanine synthase (231 aa).

An ATP-binding site is contributed by 8–18 (FSGGQDSTTCL). Zn(2+) contacts are provided by C188, C197, C200, and C203.

This sequence belongs to the QueC family. Requires Zn(2+) as cofactor.

It catalyses the reaction 7-carboxy-7-deazaguanine + NH4(+) + ATP = 7-cyano-7-deazaguanine + ADP + phosphate + H2O + H(+). Its pathway is purine metabolism; 7-cyano-7-deazaguanine biosynthesis. In terms of biological role, catalyzes the ATP-dependent conversion of 7-carboxy-7-deazaguanine (CDG) to 7-cyano-7-deazaguanine (preQ(0)). In Escherichia coli O157:H7, this protein is 7-cyano-7-deazaguanine synthase.